Consider the following 210-residue polypeptide: Probable GTP-binding protein EngB (210 aa).

The region spanning 22–198 is the EngB-type G domain; sequence FLPEYAFIGR…LTYIDEVNQE (177 aa). GTP contacts are provided by residues 30–37, 57–61, 75–78, 142–145, and 177–179; these read GRSNVGKS, GKTQL, DLPG, TKAD, and TSS. Mg(2+) contacts are provided by Ser37 and Thr59.

It belongs to the TRAFAC class TrmE-Era-EngA-EngB-Septin-like GTPase superfamily. EngB GTPase family. The cofactor is Mg(2+).

Its function is as follows. Necessary for normal cell division and for the maintenance of normal septation. The protein is Probable GTP-binding protein EngB of Flavobacterium johnsoniae (strain ATCC 17061 / DSM 2064 / JCM 8514 / BCRC 14874 / CCUG 350202 / NBRC 14942 / NCIMB 11054 / UW101) (Cytophaga johnsonae).